The following is a 121-amino-acid chain: MLATRVRRRSSRLIRSRPLVVRSRMRCAAGKSNTVRLSGMAVSAHSASFGCSLHQRVRAAFKSRSASVRSGALKMARIWAATVFRASCRVVSAPAFCCRWNWQRCQGTEGSTARRAALSPA.

This Burkholderia multivorans (strain ATCC 17616 / 249) protein is Insertion element IS406 uncharacterized 13.3 kDa protein.